The following is a 235-amino-acid chain: Retron Ec48 transmembrane protein (235 aa).

2 helical membrane passes run 11–31 (IVGVSSALFLIFSLISLFETI) and 64–84 (AFGWLITTFVTVFGVMIALMT).

The protein localises to the cell inner membrane. Its function is as follows. Membrane component of antiviral defense system Retron Ec48, composed of a non-coding RNA (ncRNA), a reverse transcriptase (RT) and this membrane protein. Expression of this retron confers protection against bacteriophages lambda, T2, T4, T5 and T7. At multiplicity of infection (MOI) of 0.02 cultures grow normally when infected with lambda without collapsing, at MOI 2 cultures enter growth stasis. At MOI 3 cell membranes are permeabilized within 15 minutes of infection but do not lyse, suggesting the phage are not able to finish a replication cycle. Antiviral defense is suppressed by mutations that knockout the lambda gam expression or phage T7 gp5.9 expression; both viral genes inhibit host RecBCD. The Ec48 retron may sense the integrity of the RecBCD enzyme; when RecBCD is perturbed by viral proteins the Ec48 effector (the membrane protein) is activated, leading to abortive infection and bacterial growth arrest. The protein is Retron Ec48 transmembrane protein of Escherichia coli.